The chain runs to 89 residues: Small ribosomal subunit protein uS15 (89 aa).

Belongs to the universal ribosomal protein uS15 family. In terms of assembly, part of the 30S ribosomal subunit. Forms a bridge to the 50S subunit in the 70S ribosome, contacting the 23S rRNA.

Its function is as follows. One of the primary rRNA binding proteins, it binds directly to 16S rRNA where it helps nucleate assembly of the platform of the 30S subunit by binding and bridging several RNA helices of the 16S rRNA. In terms of biological role, forms an intersubunit bridge (bridge B4) with the 23S rRNA of the 50S subunit in the ribosome. The sequence is that of Small ribosomal subunit protein uS15 from Orientia tsutsugamushi (strain Ikeda) (Rickettsia tsutsugamushi).